A 1362-amino-acid polypeptide reads, in one-letter code: Bromodomain-containing protein 4B (1362 aa).

Disordered regions lie at residues 22-57 (EGAQ…QPKR), 200-243 (SLGD…HPPA), 274-367 (LANH…DSKT), 476-639 (DEPE…SYEE), 699-941 (CLRK…TQSP), and 953-1349 (SQAP…MNFQ). Pro residues predominate over residues 34–49 (QPQPQTPMMQTPPPEI). A Bromo 1 domain is found at 57–163 (RQTNQLQYLL…KLFLQKISEM (107 aa)). The segment covering 219 to 234 (TPTPPAVIRAPTPPQT) has biased composition (pro residues). Over residues 326-342 (PRKESGRQIRPIKKTEV) the composition is skewed to basic and acidic residues. The segment covering 348-358 (PAPPDLHPQPA) has biased composition (pro residues). The 110-residue stretch at 365 to 474 (SKTSEQLRYC…DVFEMRFAKM (110 aa)) folds into the Bromo 2 domain. Residues 481–503 (APAPVPSPAPGPPAPSIKIPPPT) show a composition bias toward pro residues. Residues 503 to 521 (TSSDTSSDSSSDSESSSDS) are NPS region. Residues 504–516 (SSDTSSDSSSDSE) show a composition bias toward low complexity. The interval 542 to 597 (QLAALSQPQPNKPKKKEREKRKEKHKRKEEVEETRKGRIREPPAKKPKKSVQVSGG) is BID region. Residues 553–568 (KPKKKEREKRKEKHKR) show a composition bias toward basic residues. Basic and acidic residues predominate over residues 569 to 585 (KEEVEETRKGRIREPPA). The span at 606-621 (PPPVTRPARPAPPPAP) shows a compositional bias: pro residues. The NET domain maps to 623–707 (ESSEEDTQRC…SCLRKKRKPQ (85 aa)). The span at 628–639 (DTQRCRPMSYEE) shows a compositional bias: basic and acidic residues. Residues 722-737 (SYSSSESESSSESSTS) are compositionally biased toward low complexity. The span at 750–766 (QKKKGHSGRESRKHHHP) shows a compositional bias: basic residues. Pro residues-rich tracts occupy residues 772–793 (IAPP…PPPS) and 871–889 (PARP…PHHQ). Residues 893-905 (HVHHHHHHHHHAQ) show a composition bias toward basic residues. Residues 926–941 (YLQQLHKSQQPPTQSP) are compositionally biased toward polar residues. 4 stretches are compositionally biased toward low complexity: residues 953–963 (SQAPMAAPAQS), 977–1006 (SSAS…QPAG), 1014–1028 (QQQQ…PALQ), and 1041–1050 (HQQAKQQQVI). A C-terminal (CTD) region region spans residues 1061–1361 (RQQKQETYPG…LMEIFEQNLF (301 aa)). Residues 1086–1099 (QVPPYPGLTHPPSP) show a composition bias toward pro residues. Residues 1186–1207 (PEKEKQKQEPKTPVAPKKDLKI) are compositionally biased toward basic and acidic residues. A compositionally biased stretch (polar residues) spans 1224–1234 (PTSAGKSTSDS). Basic and acidic residues predominate over residues 1236–1293 (ELFRRQAREKEERERALKHQAEQAERMRREQERMRTREDDDVQDQTRKAHEEARRRQE). Over residues 1308–1319 (PAAPSPAQSSQP) the composition is skewed to low complexity. Positions 1322–1334 (DQREMARKREQER) are enriched in basic and acidic residues.

It belongs to the BET family.

Its subcellular location is the nucleus. The protein resides in the chromosome. Chromatin reader protein that recognizes and binds acetylated histones and plays a key role in transmission of epigenetic memory across cell divisions and transcription regulation. Remains associated with acetylated chromatin throughout the entire cell cycle and provides epigenetic memory for postmitotic G1 gene transcription by preserving acetylated chromatin status and maintaining high-order chromatin structure. During interphase, plays a key role in regulating the transcription of signal-inducible genes by associating with the P-TEFb complex and recruiting it to promoters. The chain is Bromodomain-containing protein 4B (brd4-b) from Xenopus laevis (African clawed frog).